We begin with the raw amino-acid sequence, 115 residues long: NADH-ubiquinone oxidoreductase chain 3 (115 aa).

3 consecutive transmembrane segments (helical) span residues 3–23 (LYTV…VAFW), 55–75 (FFLV…LLPL), and 86–106 (TMMI…AYEW).

It belongs to the complex I subunit 3 family. As to quaternary structure, core subunit of respiratory chain NADH dehydrogenase (Complex I) which is composed of 45 different subunits. Interacts with TMEM186. Interacts with TMEM242.

The protein localises to the mitochondrion inner membrane. The catalysed reaction is a ubiquinone + NADH + 5 H(+)(in) = a ubiquinol + NAD(+) + 4 H(+)(out). Core subunit of the mitochondrial membrane respiratory chain NADH dehydrogenase (Complex I) which catalyzes electron transfer from NADH through the respiratory chain, using ubiquinone as an electron acceptor. Essential for the catalytic activity of complex I. The polypeptide is NADH-ubiquinone oxidoreductase chain 3 (Mus musculus (Mouse)).